The primary structure comprises 588 residues: Glutamyl-tRNA(Gln) amidotransferase subunit B, mitochondrial (588 aa).

The transit peptide at 1–109 (MLRSWIGSGT…RAPTSTSETP (109 aa)) directs the protein to the mitochondrion. The span at 22–35 (SSLPSPKASFSSAP) shows a compositional bias: low complexity. The interval 22–50 (SSLPSPKASFSSAPNRYLQPPTSADRVPL) is disordered.

This sequence belongs to the GatB/GatE family. GatB subfamily. In terms of assembly, subunit of the heterotrimeric GatCAB amidotransferase (AdT) complex, composed of A, B and C subunits.

The protein localises to the mitochondrion. It carries out the reaction L-glutamyl-tRNA(Gln) + L-glutamine + ATP + H2O = L-glutaminyl-tRNA(Gln) + L-glutamate + ADP + phosphate + H(+). In terms of biological role, allows the formation of correctly charged Gln-tRNA(Gln) through the transamidation of misacylated Glu-tRNA(Gln) in the mitochondria. The reaction takes place in the presence of glutamine and ATP through an activated gamma-phospho-Glu-tRNA(Gln). This Penicillium rubens (strain ATCC 28089 / DSM 1075 / NRRL 1951 / Wisconsin 54-1255) (Penicillium chrysogenum) protein is Glutamyl-tRNA(Gln) amidotransferase subunit B, mitochondrial.